The chain runs to 500 residues: Probable cytosol aminopeptidase (500 aa).

The Mn(2+) site is built by lysine 265 and aspartate 270. The active site involves lysine 277. Mn(2+)-binding residues include aspartate 288, aspartate 347, and glutamate 349. The active site involves arginine 351.

Belongs to the peptidase M17 family. Requires Mn(2+) as cofactor.

It localises to the cytoplasm. It catalyses the reaction Release of an N-terminal amino acid, Xaa-|-Yaa-, in which Xaa is preferably Leu, but may be other amino acids including Pro although not Arg or Lys, and Yaa may be Pro. Amino acid amides and methyl esters are also readily hydrolyzed, but rates on arylamides are exceedingly low.. The catalysed reaction is Release of an N-terminal amino acid, preferentially leucine, but not glutamic or aspartic acids.. Its function is as follows. Presumably involved in the processing and regular turnover of intracellular proteins. Catalyzes the removal of unsubstituted N-terminal amino acids from various peptides. The chain is Probable cytosol aminopeptidase from Rickettsia rickettsii (strain Iowa).